We begin with the raw amino-acid sequence, 487 residues long: Probable aspartic-type endopeptidase opsB (487 aa).

An N-terminal signal peptide occupies residues 1-20 (MQKSWLVLLVACLGLQGTTA). A Peptidase A1 domain is found at 69-398 (YFCNITLGTP…DLSNNEISLA (330 aa)). N-linked (GlcNAc...) asparagine glycosylation is present at Asn72. Residue Asp87 is part of the active site. Residues Asn99, Asn111, Asn132, and Asn272 are each glycosylated (N-linked (GlcNAc...) asparagine). Asp286 is an active-site residue. N-linked (GlcNAc...) asparagine glycosylation is found at Asn329 and Asn403. Residue Ala463 is the site of GPI-anchor amidated alanine attachment. A propeptide spans 464–487 (PAGPTDVPKHLVLGAAAIGYVLAF) (removed in mature form).

This sequence belongs to the peptidase A1 family.

It is found in the cell membrane. In terms of biological role, probable GPI-anchored aspartic-type endopeptidase. The chain is Probable aspartic-type endopeptidase opsB (opsB) from Aspergillus oryzae (strain ATCC 42149 / RIB 40) (Yellow koji mold).